Consider the following 985-residue polypeptide: Na(+)/H(+) antiporter (985 aa).

Residues 1-12 (MAIWEQLEVSKA) lie on the Cytoplasmic side of the membrane. Residues 13–33 (HVAYACVGVFSSIFSLVSLYV) traverse the membrane as a helical segment. At 34-36 (KEK) the chain is on the extracellular side. A helical transmembrane segment spans residues 37 to 57 (LYIGESTVAGIFGLIVGPVCL). Residues 58–70 (NWFNPLKWGNSDS) are Cytoplasmic-facing. Residues 71–91 (ITLEITRIVLCLQIFAVAVEL) form a helical membrane-spanning segment. Topologically, residues 92–105 (PRKYMLKHWVSVTM) are extracellular. A helical transmembrane segment spans residues 106 to 126 (LLLPVMTAGWLIIGLFVWILI). The Cytoplasmic segment spans residues 127 to 128 (PG). Residues 129-149 (LNFSASLLISACITATDPILA) traverse the membrane as a helical segment. The Extracellular portion of the chain corresponds to 150 to 176 (QSVVSGKFAQRVPGHLRNLLSAESGCN). Residues 177–197 (DGMAFPFLFLSMNLILHPGNG) traverse the membrane as a helical segment. The Cytoplasmic portion of the chain corresponds to 198–203 (REIVKD). Residues 204–224 (WICVTILYECLFGCLLGCFIG) traverse the membrane as a helical segment. At 225 to 244 (YVGRITIRFAEKKNIIDRES) the chain is on the extracellular side. Residues 245–265 (FLAFYVVLAFMCAGFGSILGV) traverse the membrane as a helical segment. At 266 to 294 (DDLLVSFAAGATFAWDGWFSQKTQESNVS) the chain is on the cytoplasmic side. A helical membrane pass occupies residues 295 to 315 (TVIDLLLNYAYFIYFGAIIPW). Residues 316–319 (SQFN) lie on the Extracellular side of the membrane. A helical membrane pass occupies residues 320–340 (NGEIGTNVWRLIILSIVVIFL). Over 341-361 (RRIPAVMILRPLIPDIKSWRE) the chain is Cytoplasmic. The chain crosses the membrane as a helical span at residues 362–382 (ALFVGHFGPIGVGAIFAAILA). The Extracellular segment spans residues 383 to 410 (RGELESTFSDEPTPLNVVPSKEESKHWQ). The helical transmembrane segment at 411–431 (LIACIWPITCFFIVTSIIVHG) threads the bilayer. Residues 432 to 985 (SSVAIITLGR…ALSKTLGLNK (554 aa)) are Cytoplasmic-facing. Disordered regions lie at residues 489–701 (MTLS…KPGT) and 726–760 (DRNEARDDEVSVDSTAHSSLTTTMTNLSSSSGGRL). Polar residues predominate over residues 517–526 (NNDQIGSVAT). Residues 538–558 (PRRRKLSRKEKRLNRRQKLRN) are compositionally biased toward basic residues. Basic and acidic residues-rich tracts occupy residues 559–572 (KGREIFSSRSKNEM) and 580–593 (DLGRERLQKEKEAR). The residue at position 568 (S568) is a Phosphoserine. The span at 637–646 (SFESSERSSS) shows a compositional bias: low complexity. A compositionally biased stretch (acidic residues) spans 661 to 675 (EETESEIESEDEMEN). The segment covering 676 to 698 (ESERSMASSEERRIRKMKEEEMK) has biased composition (basic and acidic residues). Low complexity predominate over residues 743-756 (SSLTTTMTNLSSSS). T765 carries the phosphothreonine modification. Phosphoserine is present on residues S768 and S774. A disordered region spans residues 812 to 985 (INPHKSDDDK…ALSKTLGLNK (174 aa)). 2 stretches are compositionally biased toward basic and acidic residues: residues 815 to 828 (HKSDDDKSKNRPRN) and 854 to 863 (DEEKAIEGPS). The span at 887 to 920 (LDLEDEPSSEEDLGDSYNMDDSEDYDDNAYESET) shows a compositional bias: acidic residues. The span at 970-979 (SAAVKSALSK) shows a compositional bias: low complexity.

The protein belongs to the fungal Na(+)/H(+) exchanger family.

Its subcellular location is the cell membrane. Functionally, sodium export from cell, takes up external protons in exchange for internal sodium ions. Also capable of exporting potassium ions. The chain is Na(+)/H(+) antiporter (NHA1) from Saccharomyces cerevisiae (strain ATCC 204508 / S288c) (Baker's yeast).